A 72-amino-acid polypeptide reads, in one-letter code: Aurein-2.2 (72 aa).

Positions 1-22 (MAFLKKSLFLVLFLGLVSLSIC) are cleaved as a signal peptide. Positions 23–49 (EKEKRQNEEDEDENEAANHEEGSEEKR) are excised as a propeptide. The tract at residues 27–47 (RQNEEDEDENEAANHEEGSEE) is disordered. The span at 38-47 (AANHEEGSEE) shows a compositional bias: basic and acidic residues. Leu65 bears the Leucine amide mark. The propeptide occupies 69–72 (NDLE).

In terms of processing, amidation is essential for antibacterial activity against Gram-positive bacteria. As to expression, expressed by the skin dorsal glands.

The protein localises to the secreted. The protein resides in the target cell membrane. Amphipathic alpha-helical antimicrobial peptide with weak to moderate activity against Gram-positive bacteria, and no activity against Gram-negative bacteria. Probably acts by disturbing membrane functions with its amphipathic structure. Strongly inhibits the formation of NO by neuronal nitric oxide synthase (nNOS) at micromolar concentrations. Acts by a non-competitive mechanism, probably by binding to calcium/calmodulin and as a consequence blocking calmodulin attachment to nNOS. This chain is Aurein-2.2, found in Ranoidea aurea (Green and golden bell frog).